The chain runs to 620 residues: Guanylate-binding protein 3 (620 aa).

The interval methionine 1–cysteine 304 is GTPase domain (Globular). In terms of domain architecture, GB1/RHD3-type G spans alanine 29 to lysine 271. GTP contacts are provided by residues glycine 39 to serine 46, leucine 61 to serine 63, and aspartate 91 to leucine 95. Coiled coils occupy residues lysine 375–leucine 411 and aspartate 477–lysine 582.

The protein belongs to the TRAFAC class dynamin-like GTPase superfamily. GB1/RHD3 GTPase family. GB1 subfamily. In terms of assembly, heterodimer with other family members, including GBP1, GBP2 and GBP5. Dimerization regulates subcellular location. Brain, lung, heart, spleen, kidney, liver and intestine.

It is found in the cytoplasm. It localises to the perinuclear region. The protein localises to the golgi apparatus membrane. It carries out the reaction GTP + H2O = GDP + phosphate + H(+). In terms of biological role, interferon (IFN)-inducible GTPase that plays important roles in innate immunity against a diverse range of bacterial, viral and protozoan pathogens. Hydrolyzes GTP very efficiently; GDP rather than GMP is the major reaction product. Following infection, recruited to the pathogen-containing vacuoles or vacuole-escaped bacteria and acts as a positive regulator of inflammasome assembly by promoting the release of inflammasome ligands from bacteria. Acts by promoting lysis of pathogen-containing vacuoles, releasing pathogens into the cytosol. Following pathogen release in the cytosol, promotes recruitment of proteins that mediate bacterial cytolysis, such as Gm12250/Irgb10: this liberates ligands that are detected by inflammasomes, such as lipopolysaccharide (LPS) that activates the non-canonical CASP4/CASP11 inflammasome or double-stranded DNA (dsDNA) that activates the AIM2 inflammasome. May play a role in erythroid differentiation. The protein is Guanylate-binding protein 3 of Mus musculus (Mouse).